A 294-amino-acid chain; its full sequence is Cytidine deaminase (294 aa).

CMP/dCMP-type deaminase domains are found at residues 48 to 168 (DEDA…FGPK) and 186 to 294 (LTGN…VLLG). Position 89–91 (89–91 (NME)) interacts with substrate. Histidine 102 contacts Zn(2+). Glutamate 104 (proton donor) is an active-site residue. Zn(2+) is bound by residues cysteine 129 and cysteine 132.

This sequence belongs to the cytidine and deoxycytidylate deaminase family. As to quaternary structure, homodimer. Zn(2+) serves as cofactor.

The catalysed reaction is cytidine + H2O + H(+) = uridine + NH4(+). It catalyses the reaction 2'-deoxycytidine + H2O + H(+) = 2'-deoxyuridine + NH4(+). In terms of biological role, this enzyme scavenges exogenous and endogenous cytidine and 2'-deoxycytidine for UMP synthesis. The polypeptide is Cytidine deaminase (Salmonella typhi).